The chain runs to 187 residues: tRNA (cytidine(56)-2'-O)-methyltransferase (187 aa).

S-adenosyl-L-methionine contacts are provided by residues leucine 94 and 120–124; that span reads GAEKV.

It belongs to the aTrm56 family. As to quaternary structure, homodimer.

The protein resides in the cytoplasm. It catalyses the reaction cytidine(56) in tRNA + S-adenosyl-L-methionine = 2'-O-methylcytidine(56) in tRNA + S-adenosyl-L-homocysteine + H(+). Its function is as follows. Specifically catalyzes the AdoMet-dependent 2'-O-ribose methylation of cytidine at position 56 in tRNAs. This Hyperthermus butylicus (strain DSM 5456 / JCM 9403 / PLM1-5) protein is tRNA (cytidine(56)-2'-O)-methyltransferase.